The primary structure comprises 129 residues: Large ribosomal subunit protein bL20 (129 aa).

Belongs to the bacterial ribosomal protein bL20 family.

Its function is as follows. Binds directly to 23S ribosomal RNA and is necessary for the in vitro assembly process of the 50S ribosomal subunit. It is not involved in the protein synthesizing functions of that subunit. This is Large ribosomal subunit protein bL20 from Mycobacterium tuberculosis (strain ATCC 25177 / H37Ra).